The sequence spans 322 residues: Prephenate dehydratase (322 aa).

The Prephenate dehydratase domain occupies arginine 5–methionine 191. Residues serine 205–proline 282 enclose the ACT domain. Residues alanine 286–leucine 322 are disordered.

Homodimer.

The catalysed reaction is prephenate + H(+) = 3-phenylpyruvate + CO2 + H2O. Its pathway is amino-acid biosynthesis; L-phenylalanine biosynthesis; phenylpyruvate from prephenate: step 1/1. In Mycobacterium leprae (strain Br4923), this protein is Prephenate dehydratase (pheA).